Consider the following 102-residue polypeptide: PE family immunomodulator PE15 (102 aa).

A PE domain is found at 3-91 (LRVVPESLAG…SGASYAARDA (89 aa)).

This sequence belongs to the mycobacterial PE family.

Its subcellular location is the secreted. The protein resides in the cell envelope. It is found in the cell surface. Its function is as follows. May play a pivotal role in the evasion of host immune response by M.tuberculosis. Mediates production of IL-10 via activation of the p38 and ERK1/2 mitogen-activated protein kinase (MAPK) signaling pathways. This is PE family immunomodulator PE15 (PE15) from Mycobacterium tuberculosis (strain CDC 1551 / Oshkosh).